The following is a 346-amino-acid chain: Fructose-1,6-bisphosphatase class 1 (346 aa).

Mg(2+) contacts are provided by Glu-96, Asp-119, Leu-121, and Asp-122. Substrate-binding positions include 122-125 (DGSS), Asn-214, Tyr-247, and Lys-277. Glu-283 lines the Mg(2+) pocket.

This sequence belongs to the FBPase class 1 family. Homotetramer. Mg(2+) serves as cofactor.

Its subcellular location is the cytoplasm. The enzyme catalyses beta-D-fructose 1,6-bisphosphate + H2O = beta-D-fructose 6-phosphate + phosphate. It participates in carbohydrate biosynthesis; gluconeogenesis. This chain is Fructose-1,6-bisphosphatase class 1, found in Cytophaga hutchinsonii (strain ATCC 33406 / DSM 1761 / CIP 103989 / NBRC 15051 / NCIMB 9469 / D465).